The primary structure comprises 636 residues: ATP-dependent zinc metalloprotease FtsH (636 aa).

The Cytoplasmic portion of the chain corresponds to 1 to 12 (MKKLLENLSLWM). Residues 13–33 (GIIILVTLLFGQVALNFGFGI) form a helical membrane-spanning segment. At 34–104 (RNEKIQFSEF…VASGDSFLGL (71 aa)) the chain is on the periplasmic side. Residues 105–125 (LFNILISWFPMLLLIGVWIFF) traverse the membrane as a helical segment. The Cytoplasmic portion of the chain corresponds to 126–636 (MKQMQAGGNK…ESDLDTGDKE (511 aa)). Residue 197–204 (GPPGTGKT) participates in ATP binding. Histidine 419 contacts Zn(2+). Glutamate 420 is an active-site residue. Zn(2+) contacts are provided by histidine 423 and aspartate 497.

In the central section; belongs to the AAA ATPase family. The protein in the C-terminal section; belongs to the peptidase M41 family. In terms of assembly, homohexamer. It depends on Zn(2+) as a cofactor.

The protein localises to the cell inner membrane. In terms of biological role, acts as a processive, ATP-dependent zinc metallopeptidase for both cytoplasmic and membrane proteins. Plays a role in the quality control of integral membrane proteins. The chain is ATP-dependent zinc metalloprotease FtsH from Neorickettsia risticii (strain Illinois).